A 132-amino-acid polypeptide reads, in one-letter code: Large ribosomal subunit protein uL22 (132 aa).

Belongs to the universal ribosomal protein uL22 family. Part of the 50S ribosomal subunit.

Its function is as follows. This protein binds specifically to 23S rRNA; its binding is stimulated by other ribosomal proteins, e.g. L4, L17, and L20. It is important during the early stages of 50S assembly. It makes multiple contacts with different domains of the 23S rRNA in the assembled 50S subunit and ribosome. Functionally, the globular domain of the protein is located near the polypeptide exit tunnel on the outside of the subunit, while an extended beta-hairpin is found that lines the wall of the exit tunnel in the center of the 70S ribosome. The protein is Large ribosomal subunit protein uL22 of Rhodospirillum centenum (strain ATCC 51521 / SW).